A 348-amino-acid chain; its full sequence is Ricin B-like lectin R40C1 (348 aa).

The disordered stretch occupies residues 1–26 (MFGFGHHGHHGQDQPPQHHGGGGGGA). The 147-residue stretch at 199–345 (TVRIFCKADE…CEGDNQRWKI (147 aa)) folds into the Ricin B-type lectin domain.

As to expression, expressed in roots and shoots.

In terms of biological role, lectin which binds carbohydrates in vitro. Interacts through its lectin domain with glycan structures containing specific motifs. This is Ricin B-like lectin R40C1 from Oryza sativa subsp. japonica (Rice).